Here is a 231-residue protein sequence, read N- to C-terminus: Ureidoacrylate amidohydrolase RutB (231 aa).

The active-site Proton acceptor is the Asp25. The active site involves Lys134. Catalysis depends on Cys167, which acts as the Nucleophile.

The protein belongs to the isochorismatase family. RutB subfamily.

The enzyme catalyses (Z)-3-ureidoacrylate + H2O + H(+) = (Z)-3-aminoacrylate + NH4(+) + CO2. It catalyses the reaction (Z)-3-ureidoacrylate + H2O = (Z)-3-aminoacrylate + carbamate + H(+). The catalysed reaction is (Z)-2-methylureidoacrylate + H2O + H(+) = (Z)-2-methylaminoacrylate + NH4(+) + CO2. Hydrolyzes ureidoacrylate to form aminoacrylate and carbamate. The carbamate hydrolyzes spontaneously, thereby releasing one of the nitrogen atoms of the pyrimidine ring as ammonia and one of its carbon atoms as CO2. The sequence is that of Ureidoacrylate amidohydrolase RutB from Escherichia coli (strain SMS-3-5 / SECEC).